A 130-amino-acid chain; its full sequence is Lysozyme C (130 aa).

In terms of domain architecture, C-type lysozyme spans 2–130 (KVYGRCELAA…VNVWIRGCRL (129 aa)). 4 disulfide bridges follow: Cys-7/Cys-128, Cys-31/Cys-116, Cys-65/Cys-81, and Cys-77/Cys-95. Residues Glu-36 and Asp-53 contribute to the active site.

The protein belongs to the glycosyl hydrolase 22 family. As to quaternary structure, monomer.

The protein resides in the secreted. The catalysed reaction is Hydrolysis of (1-&gt;4)-beta-linkages between N-acetylmuramic acid and N-acetyl-D-glucosamine residues in a peptidoglycan and between N-acetyl-D-glucosamine residues in chitodextrins.. Its function is as follows. Lysozymes have primarily a bacteriolytic function; those in tissues and body fluids are associated with the monocyte-macrophage system and enhance the activity of immunoagents. This chain is Lysozyme C (LYZ), found in Phasianus versicolor (Green pheasant).